The chain runs to 301 residues: Peptidyl-prolyl isomerase CWC27 (301 aa).

Residues 9-159 form the PPIase cyclophilin-type domain; sequence TTAKCILYTT…YPAVLKDVEI (151 aa). A disordered region spans residues 251-280; sequence TELHDNVDEATTKETESQENIKEEPMDKRE.

This sequence belongs to the cyclophilin-type PPIase family. CWC27 subfamily. Belongs to the CWC complex (or CEF1-associated complex), a spliceosome subcomplex composed of the U2, U5 and U6 snRNAs and at least BUD13, BUD31, BRR2, CDC40, CEF1, CLF1, CUS1, CWC2, CWC15, CWC21, CWC22, CWC23, CWC24, CWC25, CWC27, ECM2, HSH155, IST3, ISY1, LEA1, MSL1, NTC20, PRP8, PRP9, PRP11, PRP19, PRP21, PRP22, PRP45, PRP46, SLU7, SMB1, SMD1, SMD2, SMD3, SMX2, SMX3, SNT309, SNU114, SPP2, SYF1, SYF2, RSE1 and YJU2.

The protein resides in the cytoplasm. The protein localises to the nucleus. It catalyses the reaction [protein]-peptidylproline (omega=180) = [protein]-peptidylproline (omega=0). In terms of biological role, PPIases accelerate the folding of proteins. Catalyzes the cis-trans isomerization of proline imidic peptide bonds in oligopeptides. Involved in pre-mRNA splicing. The polypeptide is Peptidyl-prolyl isomerase CWC27 (CWC27) (Saccharomyces cerevisiae (strain ATCC 204508 / S288c) (Baker's yeast)).